The sequence spans 270 residues: Small ribosomal subunit protein uS2 (270 aa).

Residues 207 to 225 (EEPENTEEAAEEAATEEVV) are compositionally biased toward acidic residues. The segment at 207 to 270 (EEPENTEEAA…SESAPAPVAA (64 aa)) is disordered. The segment covering 226–258 (ETAAAEAAAATNADNWDVAPDAGAGAADWAATD) has biased composition (low complexity).

It belongs to the universal ribosomal protein uS2 family. As to quaternary structure, component of the small ribosomal subunit. Mature ribosomes consist of a small (40S) and a large (60S) subunit. The 40S subunit contains about 33 different proteins and 1 molecule of RNA (18S). The 60S subunit contains about 49 different proteins and 3 molecules of RNA (25S, 5.8S and 5S). Interacts with RPS21.

The protein resides in the cytoplasm. Its function is as follows. Required for the assembly and/or stability of the 40S ribosomal subunit. Required for the processing of the 20S rRNA-precursor to mature 18S rRNA in a late step of the maturation of 40S ribosomal subunits. The sequence is that of Small ribosomal subunit protein uS2 from Yarrowia lipolytica (strain CLIB 122 / E 150) (Yeast).